A 319-amino-acid chain; its full sequence is NADH-quinone oxidoreductase subunit H 1 (319 aa).

9 consecutive transmembrane segments (helical) span residues Met-1–Val-21, Ile-77–Gly-97, Val-107–Ala-127, Leu-147–Leu-167, Val-179–Ala-199, Leu-214–Glu-234, Val-238–Leu-258, Ile-262–Leu-282, and Phe-293–Val-313.

This sequence belongs to the complex I subunit 1 family. As to quaternary structure, NDH-1 is composed of 14 different subunits. Subunits NuoA, H, J, K, L, M, N constitute the membrane sector of the complex.

Its subcellular location is the cell inner membrane. The catalysed reaction is a quinone + NADH + 5 H(+)(in) = a quinol + NAD(+) + 4 H(+)(out). Its function is as follows. NDH-1 shuttles electrons from NADH, via FMN and iron-sulfur (Fe-S) centers, to quinones in the respiratory chain. The immediate electron acceptor for the enzyme in this species is believed to be ubiquinone. Couples the redox reaction to proton translocation (for every two electrons transferred, four hydrogen ions are translocated across the cytoplasmic membrane), and thus conserves the redox energy in a proton gradient. This subunit may bind ubiquinone. The sequence is that of NADH-quinone oxidoreductase subunit H 1 from Rhodopseudomonas palustris (strain HaA2).